Consider the following 164-residue polypeptide: Photosystem II extrinsic protein V (164 aa).

Positions 1 to 27 are cleaved as a signal peptide; it reads MNRISIYRIKVLAFLFAVSTYVYPASS. Heme c contacts are provided by Cys64, Cys67, His68, and His119.

Belongs to the cytochrome c family. PsbV subfamily. In terms of assembly, PSII is composed of 1 copy each of membrane proteins PsbA, PsbB, PsbC, PsbD, PsbE, PsbF, PsbH, PsbI, PsbJ, PsbK, PsbL, PsbM, PsbT, PsbY, PsbZ, Psb30/Ycf12, at least 3 peripheral proteins of the oxygen-evolving complex and a large number of cofactors. It forms dimeric complexes. The extrinsic subunits in red algae are PsbO (OEC33), PsbQ', cytochrome c-550 and PsbU. Heme c is required as a cofactor.

It localises to the plastid. It is found in the chloroplast thylakoid membrane. In terms of biological role, one of the extrinsic, lumenal subunits of photosystem II (PSII). PSII is a light-driven water plastoquinone oxidoreductase, using light energy to abstract electrons from H(2)O, generating a proton gradient subsequently used for ATP formation. The extrinsic proteins stabilize the structure of photosystem II oxygen-evolving complex (OEC), the ion environment of oxygen evolution and protect the OEC against heat-induced inactivation. This chain is Photosystem II extrinsic protein V, found in Cyanidium caldarium (Red alga).